An 852-amino-acid polypeptide reads, in one-letter code: Aconitate hydratase B (852 aa).

Substrate is bound by residues Arg194, 237-239, 405-407, and Ser489; these read SSR and QDT. [4Fe-4S] cluster is bound by residues Cys708, Cys766, and Cys769. Residues Arg788 and Arg793 each coordinate substrate.

This sequence belongs to the aconitase/IPM isomerase family. Monomer. [4Fe-4S] cluster serves as cofactor.

It carries out the reaction citrate = D-threo-isocitrate. The enzyme catalyses (2S,3R)-3-hydroxybutane-1,2,3-tricarboxylate = 2-methyl-cis-aconitate + H2O. It functions in the pathway carbohydrate metabolism; tricarboxylic acid cycle; isocitrate from oxaloacetate: step 2/2. Its pathway is organic acid metabolism; propanoate degradation. Its function is as follows. Involved in the catabolism of short chain fatty acids (SCFA) via the tricarboxylic acid (TCA)(acetyl degradation route) and probably via the 2-methylcitrate cycle I (propionate degradation route). Catalyzes the reversible isomerization of citrate to isocitrate via cis-aconitate. Catalyzes the hydration of 2-methyl-cis-aconitate to yield (2R,3S)-2-methylisocitrate. The apo form of AcnB functions as a RNA-binding regulatory protein. This chain is Aconitate hydratase B (acnB), found in Helicobacter pylori (strain J99 / ATCC 700824) (Campylobacter pylori J99).